The sequence spans 893 residues: Ubiquitin-like protease 2 (893 aa).

The interval 538-800 (PVVLLVKDIK…YNLILQQADK (263 aa)) is protease. Residues His-644, Asp-678, and Cys-743 contribute to the active site.

This sequence belongs to the peptidase C48 family.

The protein resides in the nucleus. The protein localises to the cytoplasm. It is found in the cytosol. Functionally, protease that catalyzes two essential functions in the smo-1 pathway: processing of full-length smo-1 to their mature forms and deconjugation of smo-1 from targeted proteins. May deconjugate smo-1 from the cadherin protein hmr-1 and plays a role in its recruitment to and the maintenance of adherens junctions. Required for epidermal morphogenesis during embryonic development. In Caenorhabditis elegans, this protein is Ubiquitin-like protease 2.